We begin with the raw amino-acid sequence, 182 residues long: RNA pyrophosphohydrolase (182 aa).

In terms of domain architecture, Nudix hydrolase spans 6–149 (GYRPNVGIIL…KRLVYEQALN (144 aa)). A Nudix box motif is present at residues 38 to 59 (GGIKRGETPEEAMFRELYEEVG). A disordered region spans residues 162-182 (PRHKKEQEPFSDVVDSVRSEE).

This sequence belongs to the Nudix hydrolase family. RppH subfamily. The cofactor is a divalent metal cation.

In terms of biological role, accelerates the degradation of transcripts by removing pyrophosphate from the 5'-end of triphosphorylated RNA, leading to a more labile monophosphorylated state that can stimulate subsequent ribonuclease cleavage. This chain is RNA pyrophosphohydrolase, found in Dechloromonas aromatica (strain RCB).